The following is a 318-amino-acid chain: Mitochondrial thiamine pyrophosphate carrier (318 aa).

Solcar repeat units lie at residues 13 to 106, 116 to 202, and 214 to 309; these read NSKL…LTEL, HQFS…LKRA, and TGNL…FCNL. 5 helical membrane-spanning segments follow: residues 19 to 39, 87 to 107, 122 to 142, 173 to 193, and 220 to 240; these read AVAGSVSGFVTRALISPLDVI, ILSIGYGAVQFLAFEELTELL, FVCGGLSAGTATLTVHPVDVL, VFYKGLTPTVIAIFPYAGLQF, and LLCGCGSGVISKTFTYPLDLI. The short motif at 241 to 246 is the Substrate recognition element; sequence KKRLQV. Residues 293–313 traverse the membrane as a helical segment; sequence ALSTGFMFFWYELFCNLFHCI.

The protein belongs to the mitochondrial carrier (TC 2.A.29) family.

The protein resides in the mitochondrion membrane. It carries out the reaction thiamine phosphate(out) + thiamine diphosphate(in) = thiamine phosphate(in) + thiamine diphosphate(out). In terms of biological role, mitochondrial transporter mediating uptake of thiamine diphosphate into mitochondria. It is not clear if the antiporter activity is affected by the membrane potential or by the proton electrochemical gradient. The sequence is that of Mitochondrial thiamine pyrophosphate carrier (Slc25a19) from Mus musculus (Mouse).